We begin with the raw amino-acid sequence, 310 residues long: Malate dehydrogenase (310 aa).

NAD(+) is bound by residues 7–13 (GAAGGIG) and Asp-34. Residues Arg-81 and Arg-87 each coordinate substrate. Residues Asn-94 and 117–119 (ITN) contribute to the NAD(+) site. Substrate contacts are provided by Asn-119 and Arg-153. His-177 functions as the Proton acceptor in the catalytic mechanism. Met-227 provides a ligand contact to NAD(+).

The protein belongs to the LDH/MDH superfamily. MDH type 1 family. Homodimer.

It carries out the reaction (S)-malate + NAD(+) = oxaloacetate + NADH + H(+). Catalyzes the reversible oxidation of malate to oxaloacetate. This Pseudoalteromonas translucida (strain TAC 125) protein is Malate dehydrogenase.